The primary structure comprises 39 residues: Photosystem I reaction center subunit IX (39 aa).

A helical transmembrane segment spans residues 7–27 (FLTTAPVAFILFSSFVFALFI).

It belongs to the PsaJ family.

Its subcellular location is the cellular thylakoid membrane. Functionally, may help in the organization of the PsaE and PsaF subunits. This chain is Photosystem I reaction center subunit IX, found in Synechococcus sp. (strain JA-2-3B'a(2-13)) (Cyanobacteria bacterium Yellowstone B-Prime).